Reading from the N-terminus, the 515-residue chain is Maturase K (515 aa).

This sequence belongs to the intron maturase 2 family. MatK subfamily.

The protein localises to the plastid. The protein resides in the chloroplast. In terms of biological role, usually encoded in the trnK tRNA gene intron. Probably assists in splicing its own and other chloroplast group II introns. This Pinus sibirica (Siberian pine) protein is Maturase K.